We begin with the raw amino-acid sequence, 243 residues long: MSGHSKWSTIKRKKGTLDAKRNKIFTKLIREISIAARMGGGDIDSNPRLRLAVNKARVANMPKDNIEKAIKKGIGDNMGSEYFELTYEAYALYGVALIIKCLTDNKNRTASEVRSVLSKSGGSLGAPGSVSYMFHKKGLISYNLDKYHEDEIIELALEAGAEDIYSEGSQVEVITSADNFESVSSILRTKFEEDIAEVALVPESKVALDKEQMDKVLAIIEKLEDCDDVQEVYHNLEIVDDIC.

This sequence belongs to the TACO1 family.

The protein resides in the cytoplasm. In Borrelia duttonii (strain Ly), this protein is Probable transcriptional regulatory protein BDU_30.